The following is a 716-amino-acid chain: Phospholipid phosphatase-related protein type 3 (716 aa).

Transmembrane regions (helical) follow at residues 18-38, 70-90, and 131-151; these read LPCF…SLYF, LIPL…SIMV, and FVGV…VIQL. A glycan (N-linked (GlcNAc...) asparagine) is linked at Asn167. 3 helical membrane-spanning segments follow: residues 205 to 225, 231 to 251, and 261 to 281; these read HATL…SVIS, LKPI…LTQI, and VYAG…HAVG. The interval 311–334 is disordered; it reads SMYQQNKSVSTDELGPPGRLEGVP. Residues 312–321 show a composition bias toward polar residues; the sequence is MYQQNKSVST. An N-linked (GlcNAc...) asparagine glycan is attached at Asn316. Phosphoserine is present on residues Ser320 and Ser351. Phosphothreonine is present on Thr374. The disordered stretch occupies residues 416 to 488; that stretch reads GRGLGLPDEA…RVILPPRPGP (73 aa). Ser426 is subject to Phosphoserine. Positions 437–460 are enriched in acidic residues; that stretch reads VAEEEEEEEEEEEEEEEEEEEEEG. Ser506 is modified (phosphoserine). The interval 548-589 is disordered; the sequence is AMSKAAGGPKAETASSSSASSDSSQYRSPSDRDSASIVTIDA. Low complexity predominate over residues 562 to 575; sequence SSSSASSDSSQYRS. Residue Ser641 is modified to Phosphoserine. Residues 664–694 are disordered; sequence GEGLPPPGASEGALGAGSRESTLRRQVGALG.

Belongs to the PA-phosphatase related phosphoesterase family.

It is found in the membrane. This chain is Phospholipid phosphatase-related protein type 3, found in Rattus norvegicus (Rat).